The primary structure comprises 254 residues: uncharacterized protein (254 aa).

The S4 RNA-binding domain occupies 14–81; it reads IRLQKVLSQA…DSLVYLALNK (68 aa). Asp-119 (nucleophile) is an active-site residue.

Belongs to the pseudouridine synthase RsuA family.

The catalysed reaction is a uridine in RNA = a pseudouridine in RNA. This is an uncharacterized protein from Mycobacterium bovis (strain ATCC BAA-935 / AF2122/97).